The following is a 399-amino-acid chain: S-adenosylmethionine synthase (399 aa).

His-17 serves as a coordination point for ATP. Asp-19 is a binding site for Mg(2+). K(+) is bound at residue Glu-45. L-methionine contacts are provided by Glu-58 and Gln-101. The tract at residues 101-111 (QSADIAMGVDQ) is flexible loop. ATP contacts are provided by residues 177–179 (DGK), 244–245 (RF), Asp-253, 259–260 (RK), Ala-276, and Lys-280. An L-methionine-binding site is contributed by Asp-253. Lys-284 is a binding site for L-methionine.

Belongs to the AdoMet synthase family. As to quaternary structure, homotetramer; dimer of dimers. The cofactor is Mg(2+). Requires K(+) as cofactor.

The protein resides in the cytoplasm. The enzyme catalyses L-methionine + ATP + H2O = S-adenosyl-L-methionine + phosphate + diphosphate. It functions in the pathway amino-acid biosynthesis; S-adenosyl-L-methionine biosynthesis; S-adenosyl-L-methionine from L-methionine: step 1/1. Functionally, catalyzes the formation of S-adenosylmethionine (AdoMet) from methionine and ATP. The overall synthetic reaction is composed of two sequential steps, AdoMet formation and the subsequent tripolyphosphate hydrolysis which occurs prior to release of AdoMet from the enzyme. This chain is S-adenosylmethionine synthase, found in Bacillus thuringiensis subsp. konkukian (strain 97-27).